Consider the following 72-residue polypeptide: V-type proton ATPase subunit e (72 aa).

Over 1–2 the chain is Lumenal; sequence MS. Residues 3-23 traverse the membrane as a helical segment; sequence FYTVVATFLSVVLASAVFWVL. Residues 24 to 34 are Cytoplasmic-facing; it reads APKENQTVWRS. A helical membrane pass occupies residues 35-55; sequence TIILSMSMMFLMWAVTYLSQL. The Lumenal segment spans residues 56-72; the sequence is HPLVVPRRSDLRPEFAE.

Belongs to the V-ATPase e1/e2 subunit family. As to quaternary structure, V-ATPase is a heteromultimeric enzyme composed of a peripheral catalytic V1 complex (components A to H) attached to an integral membrane V0 proton pore complex (components: a, c, c', c'', d, e, f and VOA1).

Its subcellular location is the vacuole membrane. Its function is as follows. Subunit of the V0 complex of vacuolar(H+)-ATPase (V-ATPase), a multisubunit enzyme composed of a peripheral complex (V1) that hydrolyzes ATP and a membrane integral complex (V0) that translocates protons. V-ATPase is responsible for acidifying and maintaining the pH of intracellular compartments. The sequence is that of V-type proton ATPase subunit e (VMA9) from Eremothecium gossypii (strain ATCC 10895 / CBS 109.51 / FGSC 9923 / NRRL Y-1056) (Yeast).